The chain runs to 189 residues: Probable nicotinate-nucleotide adenylyltransferase (189 aa).

This sequence belongs to the NadD family.

The enzyme catalyses nicotinate beta-D-ribonucleotide + ATP + H(+) = deamido-NAD(+) + diphosphate. It functions in the pathway cofactor biosynthesis; NAD(+) biosynthesis; deamido-NAD(+) from nicotinate D-ribonucleotide: step 1/1. In terms of biological role, catalyzes the reversible adenylation of nicotinate mononucleotide (NaMN) to nicotinic acid adenine dinucleotide (NaAD). This is Probable nicotinate-nucleotide adenylyltransferase from Hydrogenobaculum sp. (strain Y04AAS1).